The sequence spans 357 residues: Dynein axonemal assembly factor 10 (357 aa).

6 WD repeats span residues 63–105, 115–154, 162–205, 207–249, 257–297, and 319–357; these read EKAK…MPVY, NAID…DPVA, ENKR…LRWE, NIKN…PTKG, AHKS…QRSK, and LSTQ…LNKI.

In terms of assembly, component of the PAQosome complex which is responsible for the biogenesis of several protein complexes and which consists of R2TP complex members RUVBL1, RUVBL2, RPAP3 and PIH1D1, URI complex members PFDN2, PFDN6, PDRG1, UXT and URI1 as well as ASDURF, POLR2E and DNAAF10/WDR92. Interacts with PIH1D1; the interaction associates DNAAF10 with the R2TP complex. Interacts with several dynein axonemal assembly factors. As to expression, widely expressed with the highest expression in testis.

It is found in the dynein axonemal particle. In terms of biological role, key assembly factor specifically required for the stability of axonemal dynein heavy chains in cytoplasm. The chain is Dynein axonemal assembly factor 10 from Homo sapiens (Human).